The sequence spans 657 residues: Translation factor GUF1, mitochondrial (657 aa).

The N-terminal 39 residues, 1 to 39, are a transit peptide targeting the mitochondrion; the sequence is MRGCLQSVKWLTSAVRQSQSLTSSTRFPRRLFNTSTLHY. The 181-residue stretch at 59-239 folds into the tr-type G domain; sequence ERFRNFCIVA…TVIEQVPAPV (181 aa). GTP-binding positions include 68 to 75, 132 to 136, and 186 to 189; these read AHVDHGKS, DTPGH, and NKVD.

Belongs to the TRAFAC class translation factor GTPase superfamily. Classic translation factor GTPase family. LepA subfamily.

Its subcellular location is the mitochondrion inner membrane. It catalyses the reaction GTP + H2O = GDP + phosphate + H(+). Promotes mitochondrial protein synthesis. May act as a fidelity factor of the translation reaction, by catalyzing a one-codon backward translocation of tRNAs on improperly translocated ribosomes. Binds to mitochondrial ribosomes in a GTP-dependent manner. In Blastomyces gilchristii (strain SLH14081) (Blastomyces dermatitidis), this protein is Translation factor GUF1, mitochondrial.